The chain runs to 139 residues: D-ribose pyranase (139 aa).

The Proton donor role is filled by His20. Substrate-binding positions include Asp28, His106, and 128-130 (YAN).

This sequence belongs to the RbsD / FucU family. RbsD subfamily. Homodecamer.

The protein localises to the cytoplasm. It catalyses the reaction beta-D-ribopyranose = beta-D-ribofuranose. It functions in the pathway carbohydrate metabolism; D-ribose degradation; D-ribose 5-phosphate from beta-D-ribopyranose: step 1/2. Functionally, catalyzes the interconversion of beta-pyran and beta-furan forms of D-ribose. The polypeptide is D-ribose pyranase (Vibrio vulnificus (strain CMCP6)).